The sequence spans 226 residues: ATP synthase subunit C lysine N-methyltransferase (226 aa).

Residues 35–55 (VIGGTLVALYAVATPFVAPAL) traverse the membrane as a helical segment. A required for mitochondrial location region spans residues 48–82 (TPFVAPALRKLCLPYVPATTTQVKNVLKMLRSRTG).

Belongs to the ANT/ATPSC lysine N-methyltransferase family.

The protein localises to the mitochondrion membrane. Functionally, mitochondrial protein-lysine N-methyltransferase that promotes chronic pain. Involved in persistent inflammatory and neuropathic pain: methyltransferase activity in the mitochondria of sensory neurons promotes chronic pain via a pathway that depends on the production of reactive oxygen species (ROS) and on the engagement of spinal cord microglia. Protein-lysine N-methyltransferase activity is dependent on S-adenosyl-L-methionine. The protein is ATP synthase subunit C lysine N-methyltransferase (atpsckmt) of Xenopus laevis (African clawed frog).